The primary structure comprises 464 residues: Argininosuccinate lyase (464 aa).

The protein belongs to the lyase 1 family. Argininosuccinate lyase subfamily.

The protein resides in the cytoplasm. The enzyme catalyses 2-(N(omega)-L-arginino)succinate = fumarate + L-arginine. It participates in amino-acid biosynthesis; L-arginine biosynthesis; L-arginine from L-ornithine and carbamoyl phosphate: step 3/3. This is Argininosuccinate lyase from Pseudomonas paraeruginosa (strain DSM 24068 / PA7) (Pseudomonas aeruginosa (strain PA7)).